The sequence spans 118 residues: Putative pterin-4-alpha-carbinolamine dehydratase (118 aa).

The protein belongs to the pterin-4-alpha-carbinolamine dehydratase family.

It catalyses the reaction (4aS,6R)-4a-hydroxy-L-erythro-5,6,7,8-tetrahydrobiopterin = (6R)-L-erythro-6,7-dihydrobiopterin + H2O. This Xanthomonas campestris pv. campestris (strain B100) protein is Putative pterin-4-alpha-carbinolamine dehydratase.